Reading from the N-terminus, the 86-residue chain is Toxin Tpa5 (86 aa).

Positions 1 to 20 are cleaved as a signal peptide; the sequence is MSIFPIALALLLIGLEEGEA. The 64-residue stretch at 22-85 folds into the LCN-type CS-alpha/beta domain; it reads RDGYPISKNN…WGDPGTPPCM (64 aa). Disulfide bonds link Cys-33–Cys-84, Cys-37–Cys-58, Cys-43–Cys-64, and Cys-47–Cys-66.

The protein belongs to the long (4 C-C) scorpion toxin superfamily. Sodium channel inhibitor family. Beta subfamily. As to expression, expressed by the venom gland.

The protein localises to the secreted. Beta toxins bind voltage-independently at site-4 of sodium channels (Nav) and shift the voltage of activation toward more negative potentials thereby affecting sodium channel activation and promoting spontaneous and repetitive firing. In Tityus pachyurus (Colombian scorpion), this protein is Toxin Tpa5.